A 315-amino-acid chain; its full sequence is Shiga toxin subunit A (315 aa).

An N-terminal signal peptide occupies residues 1–22 (MKIIIFRVLTFFFVIFSVNVVA). Residues 23–273 (KEFTLDFSTA…CHHHASRVAR (251 aa)) form an A1 region. The active site involves Glu189. An intrachain disulfide couples Cys264 to Cys283. Residues 274–315 (MASDEFPSMCPADGRVRGITHNKILWDSSTLGAILMRRTISS) are A2.

The protein belongs to the ribosome-inactivating protein family. As to quaternary structure, shiga toxin contains a single subunit A and five copies of subunit B.

It catalyses the reaction Endohydrolysis of the N-glycosidic bond at one specific adenosine on the 28S rRNA.. In terms of biological role, the A subunit is responsible for inhibiting protein synthesis through the catalytic inactivation of 60S ribosomal subunits. After endocytosis, the A subunit is cleaved by furin in two fragments, A1 and A2: A1 is the catalytically active fragment, and A2 is essential for holotoxin assembly with the B subunits. This is Shiga toxin subunit A (stxA) from Shigella sonnei (Shigella sonnei bacteriophage 7888).